A 373-amino-acid polypeptide reads, in one-letter code: Queuine tRNA-ribosyltransferase (373 aa).

The Proton acceptor role is filled by Asp-91. Substrate contacts are provided by residues 91–95, Asp-145, and Gln-187; that span reads DSGGF. An RNA binding region spans residues 245-251; it reads GVGTPED. The Nucleophile role is filled by Asp-264. Residues 269–273 are RNA binding; important for wobble base 34 recognition; that stretch reads TRNAR. Zn(2+) contacts are provided by Cys-302, Cys-304, Cys-307, and His-333.

Belongs to the queuine tRNA-ribosyltransferase family. In terms of assembly, homodimer. Within each dimer, one monomer is responsible for RNA recognition and catalysis, while the other monomer binds to the replacement base PreQ1. Zn(2+) serves as cofactor.

The enzyme catalyses 7-aminomethyl-7-carbaguanine + guanosine(34) in tRNA = 7-aminomethyl-7-carbaguanosine(34) in tRNA + guanine. It functions in the pathway tRNA modification; tRNA-queuosine biosynthesis. Functionally, catalyzes the base-exchange of a guanine (G) residue with the queuine precursor 7-aminomethyl-7-deazaguanine (PreQ1) at position 34 (anticodon wobble position) in tRNAs with GU(N) anticodons (tRNA-Asp, -Asn, -His and -Tyr). Catalysis occurs through a double-displacement mechanism. The nucleophile active site attacks the C1' of nucleotide 34 to detach the guanine base from the RNA, forming a covalent enzyme-RNA intermediate. The proton acceptor active site deprotonates the incoming PreQ1, allowing a nucleophilic attack on the C1' of the ribose to form the product. After dissociation, two additional enzymatic reactions on the tRNA convert PreQ1 to queuine (Q), resulting in the hypermodified nucleoside queuosine (7-(((4,5-cis-dihydroxy-2-cyclopenten-1-yl)amino)methyl)-7-deazaguanosine). This chain is Queuine tRNA-ribosyltransferase, found in Syntrophobacter fumaroxidans (strain DSM 10017 / MPOB).